Reading from the N-terminus, the 154-residue chain is Ribosome maturation factor RimP (154 aa).

Belongs to the RimP family.

The protein resides in the cytoplasm. In terms of biological role, required for maturation of 30S ribosomal subunits. In Finegoldia magna (strain ATCC 29328 / DSM 20472 / WAL 2508) (Peptostreptococcus magnus), this protein is Ribosome maturation factor RimP.